The sequence spans 631 residues: tRNA uridine 5-carboxymethylaminomethyl modification enzyme MnmG (631 aa).

15 to 20 is an FAD binding site; it reads GAGHAG. The segment at 214 to 233 is disordered; the sequence is YSKTEEEPGDKEPRHFSFTS. Residue 276 to 290 coordinates NAD(+); the sequence is GPRYCPSIETKVVRF.

This sequence belongs to the MnmG family. As to quaternary structure, homodimer. Heterotetramer of two MnmE and two MnmG subunits. FAD serves as cofactor.

It localises to the cytoplasm. Its function is as follows. NAD-binding protein involved in the addition of a carboxymethylaminomethyl (cmnm) group at the wobble position (U34) of certain tRNAs, forming tRNA-cmnm(5)s(2)U34. The polypeptide is tRNA uridine 5-carboxymethylaminomethyl modification enzyme MnmG (Lactobacillus delbrueckii subsp. bulgaricus (strain ATCC 11842 / DSM 20081 / BCRC 10696 / JCM 1002 / NBRC 13953 / NCIMB 11778 / NCTC 12712 / WDCM 00102 / Lb 14)).